We begin with the raw amino-acid sequence, 298 residues long: TLR adapter interacting with SLC15A4 on the lysosome (298 aa).

The pLxIS motif motif lies at 287-291; the sequence is SLHIS. At serine 291 the chain carries Phosphoserine.

Interacts (via pLxIS motif) with IRF5; leading to IRF5 activation. Interacts with SLC15A4; leading to its recruitment to endolysosome. The phosphorylated pLxIS motif constitutes an IRF5-binding motif, leading to recruitment of the transcription factor IRF5 to induce type-I interferons and other cytokines.

It is found in the lysosome membrane. It localises to the endosome membrane. Its subcellular location is the nucleus. The protein localises to the cytoplasm. Innate immune adapter that mediates the recruitment and activation of IRF5 downstream of endolysosomal toll-like receptors TLR7, TLR8 and TLR9. Following recruitment to endolysosome by SLC15A4 downstream of TLR7, TLR8 and TLR9, specifically recruits IRF5 transcription factor via its pLxIS motif, leading to IRF5 activation and subsequent expression of type I interferons. Plays a role in the regulation of endolysosomal pH in immune cells such as B-cells, dendritic cells and monocytes. This is TLR adapter interacting with SLC15A4 on the lysosome from Mus musculus (Mouse).